The sequence spans 273 residues: 3-methyl-2-oxobutanoate hydroxymethyltransferase 3 (273 aa).

Positions 49 and 88 each coordinate Mg(2+). 3-methyl-2-oxobutanoate-binding positions include 49–50 (DS), D88, and K118. E120 is a binding site for Mg(2+). E187 acts as the Proton acceptor in catalysis.

This sequence belongs to the PanB family. As to quaternary structure, homodecamer; pentamer of dimers. The cofactor is Mg(2+).

It localises to the cytoplasm. The catalysed reaction is 3-methyl-2-oxobutanoate + (6R)-5,10-methylene-5,6,7,8-tetrahydrofolate + H2O = 2-dehydropantoate + (6S)-5,6,7,8-tetrahydrofolate. Its pathway is cofactor biosynthesis; (R)-pantothenate biosynthesis; (R)-pantoate from 3-methyl-2-oxobutanoate: step 1/2. In terms of biological role, catalyzes the reversible reaction in which hydroxymethyl group from 5,10-methylenetetrahydrofolate is transferred onto alpha-ketoisovalerate to form ketopantoate. The chain is 3-methyl-2-oxobutanoate hydroxymethyltransferase 3 from Bradyrhizobium diazoefficiens (strain JCM 10833 / BCRC 13528 / IAM 13628 / NBRC 14792 / USDA 110).